The primary structure comprises 533 residues: D-3-phosphoglycerate dehydrogenase (533 aa).

Position 2 is an N-acetylalanine (Ala-2). Position 14 is a phosphoserine (Ser-14). The residue at position 58 (Lys-58) is an N6-acetyllysine. NAD(+) is bound by residues Thr-78, 155-156 (RI), Asp-175, Thr-207, 234-236 (CAR), and Asp-260. Thr-78 carries the post-translational modification Phosphothreonine. Arg-236 is a catalytic residue. Residue Glu-265 is part of the active site. The Proton donor role is filled by His-283. An NAD(+)-binding site is contributed by 283–286 (HLGA).

This sequence belongs to the D-isomer specific 2-hydroxyacid dehydrogenase family. In terms of assembly, homotetramer.

The enzyme catalyses (2R)-3-phosphoglycerate + NAD(+) = 3-phosphooxypyruvate + NADH + H(+). The catalysed reaction is (R)-2-hydroxyglutarate + NAD(+) = 2-oxoglutarate + NADH + H(+). It catalyses the reaction (S)-malate + NAD(+) = oxaloacetate + NADH + H(+). It participates in amino-acid biosynthesis; L-serine biosynthesis; L-serine from 3-phospho-D-glycerate: step 1/3. Functionally, catalyzes the reversible oxidation of 3-phospho-D-glycerate to 3-phosphonooxypyruvate, the first step of the phosphorylated L-serine biosynthesis pathway. Also catalyzes the reversible oxidation of 2-hydroxyglutarate to 2-oxoglutarate and the reversible oxidation of (S)-malate to oxaloacetate. The sequence is that of D-3-phosphoglycerate dehydrogenase (PHGDH) from Sus scrofa (Pig).